We begin with the raw amino-acid sequence, 648 residues long: Bifunctional protein TilS/HprT (648 aa).

Residue 29–34 coordinates ATP; that stretch reads SGGPDS. A Mg(2+)-binding site is contributed by Asp627.

In the N-terminal section; belongs to the tRNA(Ile)-lysidine synthase family. The protein in the C-terminal section; belongs to the purine/pyrimidine phosphoribosyltransferase family. Mg(2+) is required as a cofactor.

The protein localises to the cytoplasm. It catalyses the reaction IMP + diphosphate = hypoxanthine + 5-phospho-alpha-D-ribose 1-diphosphate. The catalysed reaction is GMP + diphosphate = guanine + 5-phospho-alpha-D-ribose 1-diphosphate. It carries out the reaction cytidine(34) in tRNA(Ile2) + L-lysine + ATP = lysidine(34) in tRNA(Ile2) + AMP + diphosphate + H(+). Its function is as follows. Ligates lysine onto the cytidine present at position 34 of the AUA codon-specific tRNA(Ile) that contains the anticodon CAU, in an ATP-dependent manner. Cytidine is converted to lysidine, thus changing the amino acid specificity of the tRNA from methionine to isoleucine. This Listeria innocua serovar 6a (strain ATCC BAA-680 / CLIP 11262) protein is Bifunctional protein TilS/HprT (tilS/hprT).